Reading from the N-terminus, the 244-residue chain is MKRLRCVLAYDGTDFSGFQVQPDQVTVQGEIEAALNRVTGEDIQVFGSGRTDAGVHARGQVIHFDTASNIPMDKWRFVLNNQLPDSIVIRTVEEVDASFHARFDVQVKEYRYCIDNNPVADVFRHRYADHVRFPLDVDAMQQAAHYLVGEHDFTSFCSAKTYVEDKVRTVYGLSVEKIGDEVWVTCRGNGFLYNMVRIIVGTLVEVGQGKRNPAELREILAACDREKAGKTAPAKGLTMWEVVY.

Residue aspartate 52 is the Nucleophile of the active site. A substrate-binding site is contributed by tyrosine 110.

This sequence belongs to the tRNA pseudouridine synthase TruA family. As to quaternary structure, homodimer.

The enzyme catalyses uridine(38/39/40) in tRNA = pseudouridine(38/39/40) in tRNA. Its function is as follows. Formation of pseudouridine at positions 38, 39 and 40 in the anticodon stem and loop of transfer RNAs. This Brevibacillus brevis (strain 47 / JCM 6285 / NBRC 100599) protein is tRNA pseudouridine synthase A.